Consider the following 155-residue polypeptide: FUN14 domain-containing protein 1 (155 aa).

Over 1–47 the chain is Cytoplasmic; sequence MATRNPPPQEYESDDDSYEVLDLTEYARRHHWWNRVFGHSSGPMVEK. A phosphoserine mark is found at Ser13 and Ser17. Residue Tyr18 is modified to Phosphotyrosine; by SRC. The YXXL signature appears at 18 to 21; sequence YEVL. Residues 48–68 traverse the membrane as a helical segment; sequence YSVATQIVMGGVSGWCAGFLF. The Mitochondrial intermembrane segment spans residues 69-74; the sequence is QKVGKL. A helical transmembrane segment spans residues 75 to 95; that stretch reads AATAVGGGFLLLQIASHSGYV. Over 96-133 the chain is Cytoplasmic; the sequence is QIDWKRVEKDVNKAKRQIKKRANKAAPEINNIIEEATE. Lys119 participates in a covalent cross-link: Glycyl lysine isopeptide (Lys-Gly) (interchain with G-Cter in ubiquitin). The chain crosses the membrane as a helical span at residues 134-154; the sequence is FVKQNIVISSGFVGGFLLGLA. A topological domain (mitochondrial intermembrane) is located at residue Ser155.

This sequence belongs to the FUN14 family. In terms of assembly, interacts (via YXXL motif) with MAP1 LC3 family proteins MAP1LC3A, MAP1LC3B and GABARAP. Interacts with DNM1L/DPR1. Interacts with GPX4. In terms of processing, phosphorylation at Ser-13 by CK2 and at Tyr-18 by SRC inhibits activation of mitophagy. Following hypoxia, dephosphorylated at Tyr-18, leading to interaction with MAP1 LC3 family proteins and triggering mitophagy. Dephosphorylation is mediated by PGAM5. Phosphorylated by ULK1 at Ser-17 which enhances FUNDC1 binding to LC3. Post-translationally, ubiquitinated on Lys-119. Deubiquitinated by USP19; leading to hypoxia-induced DRP1 oligomerization and GTPase activity.

It localises to the mitochondrion outer membrane. Its function is as follows. Integral mitochondrial outer-membrane protein that mediates the formation of mitochondria-associated endoplasmic reticulum membranes (MAMs). In turn, mediates angiogenesis and neoangiogenesis through interference with intracellular Ca(2+) communication and regulation of the vascular endothelial growth factor receptor KDR/VEGFR2 expression at both mRNA and protein levels. Also acts as an activator of hypoxia-induced mitophagy, an important mechanism for mitochondrial quality and homeostasis, by interacting with and recruiting LC3 protein family to mitochondria. Mechanistically, recruits DRP1 at ER-mitochondria contact sites leading to DRP1 oligomerization and GTPase activity to facilitate mitochondrial fission during hypoxia. Additionally, plays a role in hepatic ferroptosis by interacting directly with glutathione peroxidase/GPX4 to facilitate its recruitment into mitochondria through TOM/TIM complex where it is degraded by mitophagy. The sequence is that of FUN14 domain-containing protein 1 (FUNDC1) from Bos taurus (Bovine).